The following is a 180-amino-acid chain: Large ribosomal subunit protein uL6 (180 aa).

Belongs to the universal ribosomal protein uL6 family. Part of the 50S ribosomal subunit.

In terms of biological role, this protein binds to the 23S rRNA, and is important in its secondary structure. It is located near the subunit interface in the base of the L7/L12 stalk, and near the tRNA binding site of the peptidyltransferase center. In Clostridium botulinum (strain 657 / Type Ba4), this protein is Large ribosomal subunit protein uL6.